Consider the following 152-residue polypeptide: Xanthine-guanine phosphoribosyltransferase (152 aa).

Residues 37–38, arginine 69, and 88–96 contribute to the 5-phospho-alpha-D-ribose 1-diphosphate site; these read RG and DDLVDTGGT. Arginine 69 contacts GMP. Aspartate 89 lines the Mg(2+) pocket. Guanine is bound by residues aspartate 92 and isoleucine 135. 2 residues coordinate xanthine: aspartate 92 and isoleucine 135. GMP is bound by residues 92 to 96 and 134 to 135; these read DTGGT and WI.

Belongs to the purine/pyrimidine phosphoribosyltransferase family. XGPT subfamily. As to quaternary structure, homotetramer. Requires Mg(2+) as cofactor.

It is found in the cell inner membrane. It carries out the reaction GMP + diphosphate = guanine + 5-phospho-alpha-D-ribose 1-diphosphate. It catalyses the reaction XMP + diphosphate = xanthine + 5-phospho-alpha-D-ribose 1-diphosphate. The catalysed reaction is IMP + diphosphate = hypoxanthine + 5-phospho-alpha-D-ribose 1-diphosphate. It participates in purine metabolism; GMP biosynthesis via salvage pathway; GMP from guanine: step 1/1. It functions in the pathway purine metabolism; XMP biosynthesis via salvage pathway; XMP from xanthine: step 1/1. Its function is as follows. Purine salvage pathway enzyme that catalyzes the transfer of the ribosyl-5-phosphate group from 5-phospho-alpha-D-ribose 1-diphosphate (PRPP) to the N9 position of the 6-oxopurines guanine and xanthine to form the corresponding ribonucleotides GMP (guanosine 5'-monophosphate) and XMP (xanthosine 5'-monophosphate), with the release of PPi. To a lesser extent, also acts on hypoxanthine. This Enterobacter sp. (strain 638) protein is Xanthine-guanine phosphoribosyltransferase.